A 329-amino-acid chain; its full sequence is Probable aryl-alcohol dehydrogenase AAD4 (329 aa).

Y30 (proton donor) is an active-site residue. H105 lines the substrate pocket. D190 to K200 contacts NADP(+).

This sequence belongs to the aldo/keto reductase family. Aldo/keto reductase 2 subfamily.

This chain is Probable aryl-alcohol dehydrogenase AAD4 (AAD4), found in Saccharomyces cerevisiae (strain ATCC 204508 / S288c) (Baker's yeast).